Consider the following 319-residue polypeptide: Fructokinase (319 aa).

It belongs to the carbohydrate kinase PfkB family. In terms of tissue distribution, expressed in swelling stolons and, at higher levels, in developing tubers. Low levels found in leaves and stems from tuberizing plants.

It carries out the reaction D-fructose + ATP = D-fructose 6-phosphate + ADP + H(+). It participates in glycan biosynthesis; starch biosynthesis. Functionally, may play an important role in maintaining the flux of carbon towards starch formation. This is Fructokinase from Solanum tuberosum (Potato).